We begin with the raw amino-acid sequence, 366 residues long: Aminomethyltransferase (366 aa).

The protein belongs to the GcvT family. In terms of assembly, the glycine cleavage system is composed of four proteins: P, T, L and H.

It catalyses the reaction N(6)-[(R)-S(8)-aminomethyldihydrolipoyl]-L-lysyl-[protein] + (6S)-5,6,7,8-tetrahydrofolate = N(6)-[(R)-dihydrolipoyl]-L-lysyl-[protein] + (6R)-5,10-methylene-5,6,7,8-tetrahydrofolate + NH4(+). Functionally, the glycine cleavage system catalyzes the degradation of glycine. The polypeptide is Aminomethyltransferase (Bacillus cytotoxicus (strain DSM 22905 / CIP 110041 / 391-98 / NVH 391-98)).